Consider the following 528-residue polypeptide: Probable methylmalonate-semialdehyde/malonate-semialdehyde dehydrogenase [acylating], mitochondrial (528 aa).

A mitochondrion-targeting transit peptide spans 1 to 26 (MLSFKFAKSASKVIGNRNFHSSSASL). NAD(+)-binding residues include F175, K199, E202, and R203. The active-site Nucleophile is C307. E408 is a binding site for NAD(+).

This sequence belongs to the aldehyde dehydrogenase family. Homotetramer.

Its subcellular location is the mitochondrion. It carries out the reaction 2-methyl-3-oxopropanoate + NAD(+) + CoA + H2O = propanoyl-CoA + hydrogencarbonate + NADH + H(+). The catalysed reaction is 3-oxopropanoate + NAD(+) + CoA + H2O = hydrogencarbonate + acetyl-CoA + NADH + H(+). Functionally, probable malonate and methylmalonate semialdehyde dehydrogenase involved in the catabolism of valine, thymine, and compounds catabolized by way of beta-alanine, including uracil and cytidine. This is Probable methylmalonate-semialdehyde/malonate-semialdehyde dehydrogenase [acylating], mitochondrial (mmsdh) from Dictyostelium discoideum (Social amoeba).